The sequence spans 362 residues: Uracil-DNA glycosylase (362 aa).

A disordered region spans residues 28-97 (ASVAPNDPTE…AGPTEDPNFA (70 aa)). The active-site Proton acceptor is the D205.

It belongs to the uracil-DNA glycosylase (UDG) superfamily. UNG family.

It localises to the host nucleus. It catalyses the reaction Hydrolyzes single-stranded DNA or mismatched double-stranded DNA and polynucleotides, releasing free uracil.. Excises uracil residues from the DNA which can arise as a result of misincorporation of dUMP residues by DNA polymerase or deamination of cytosines. Therefore may reduce deleterious uracil incorporation into the viral genome, particularly in terminally differentiated cells which lack DNA repair enzymes. The chain is Uracil-DNA glycosylase (UL2) from Psittacid herpesvirus 1 (isolate Amazon parrot/-/97-0001/1997) (PsHV-1).